The chain runs to 269 residues: Adenosylcobinamide-GDP ribazoletransferase (269 aa).

Helical transmembrane passes span 63–83 (SAYY…LLYL), 87–107 (LPPG…TGML), 137–157 (VGAF…SLLG), 158–178 (AGLP…VVLM), 202–222 (LAFL…AALV), and 246–266 (VYGL…GWGF).

It belongs to the CobS family. The cofactor is Mg(2+).

Its subcellular location is the cell membrane. It catalyses the reaction alpha-ribazole + adenosylcob(III)inamide-GDP = adenosylcob(III)alamin + GMP + H(+). The catalysed reaction is alpha-ribazole 5'-phosphate + adenosylcob(III)inamide-GDP = adenosylcob(III)alamin 5'-phosphate + GMP + H(+). It participates in cofactor biosynthesis; adenosylcobalamin biosynthesis; adenosylcobalamin from cob(II)yrinate a,c-diamide: step 7/7. Functionally, joins adenosylcobinamide-GDP and alpha-ribazole to generate adenosylcobalamin (Ado-cobalamin). Also synthesizes adenosylcobalamin 5'-phosphate from adenosylcobinamide-GDP and alpha-ribazole 5'-phosphate. This is Adenosylcobinamide-GDP ribazoletransferase from Deinococcus radiodurans (strain ATCC 13939 / DSM 20539 / JCM 16871 / CCUG 27074 / LMG 4051 / NBRC 15346 / NCIMB 9279 / VKM B-1422 / R1).